The chain runs to 898 residues: MAAPAAAAVEEGMEPRALQYEQTLMYGRYTQDLGAFAKEEAARIRLGGPEPWRSPPSPRTPPELLEYGQSRCARCRMCSVRCHKFLVSRVGEDWIFLVLLGLLMALVSWAMDYAIAACLQAQQWMSRGLNTNLLLQYLAWVTYPVVLITFSAGFTQILAPQAVGSGIPEMKTILRGVVLKEYLTLKTFVAKVIGLTCALGSGMPLGKEGPFVHIASMCAALLSKFLSLFGGIYENESRNTEMLAAACAVGVGCCFAAPIGGVLFSIEVTSTFFAVRNYWRGFFAATFSAFIFRVLAVWNRDEETITALFKTRFRLDFPFDLQELPAFAVIGIASGFGGALFVYLNRKIVQVMRKQKTINRFLMRKRLLFPALVTLLISTLTFPPGFGQFMAGQLSQKETLVTLFDNRTWVRQGLVEELEPPSTSQAWSPPRANVFLTLVIFILMKFWMSALATTIPVPCGAFMPVFVIGAAFGRLVGESMAAWFPDGIHTDSSTYRIVPGGYAVVGAAALAGAVTHTVSTAVIVFELTGQIAHILPVMIAVILANAVAQSLQPSLYDSIIRIKKLPYLPELGWGRHQQYRVRVEDIMVRDVPHVALSCTFRDLRLALHRTKGRTLALVESPESMILLGSIERTQVVALLAAQLSPARRRQSKQKRRVAHTSPPSCQESPPSPETSVCFQVKAEDAQGEPHKPLKPALKRGCSNSVNLGESPTGHVESAGIALRSLFCGSPPPEAASESEKSESSEKRKSKRVRISLASDSDLEGEMSPEEILEWEEQQLDEPVNFSDCKIDPAPFQLVERTSLHKTHTIFSLLGVDHAYVTSIGRLIGIVTLKELRKAIEGSVTAQGVKVRPPLASFRDSATSSSDTETTEVHALWGPRSRHGLPREGSPSDSDDKCQ.

Over 1 to 90 (MAAPAAAAVE…RCHKFLVSRV (90 aa)) the chain is Cytoplasmic. The tract at residues 19 to 37 (QYEQTLMYGRYTQDLGAFA) is essential for channel gating by both voltage and cell volume. T23 bears the Phosphothreonine mark. Residues 39–52 (EEAARIRLGGPEPW) form a modulates channel gating by both voltage and cell volume region. Helical transmembrane passes span 91 to 124 (GEDWIFLVLLGLLMALVSWAMDYAIAACLQAQQW) and 133 to 158 (LLLQYLAWVTYPVVLITFSAGFTQIL). The short motif at 164–168 (GSGIP) is the Selectivity filter part_1 element. Positions 167 to 174 (IPEMKTIL) form an intramembrane region, helical. A run of 2 helical transmembrane segments spans residues 183–201 (LTLKTFVAKVIGLTCALGS) and 208–226 (EGPFVHIASMCAALLSKFL). A Selectivity filter part_2 motif is present at residues 206 to 210 (GKEGP). 2 consecutive intramembrane regions (helical) follow at residues 242–254 (MLAAACAVGVGCC) and 258–266 (PIGGVLFSI). The next 5 membrane-spanning stretches (helical) occupy residues 278–298 (YWRGFFAATFSAFIFRVLAVW), 324–352 (LPAFAVIGIASGFGGALFVYLNRKIVQVM), 361–380 (FLMRKRLLFPALVTLLISTL), 432–452 (ANVFLTLVIFILMKFWMSALA), and 460–483 (GAFMPVFVIGAAFGRLVGESMAAW). The short motif at 460–464 (GAFMP) is the Selectivity filter part_3 element. The segment at residues 500–514 (GGYAVVGAAALAGAV) is an intramembrane region (helical). The note=Loop between two helices intramembrane region spans 515–516 (TH). An intramembrane region (helical) is located at residues 517–528 (TVSTAVIVFELT). Residues 529–533 (GQIAH) constitute an intramembrane region (note=Loop between two helices). The chain crosses the membrane as a helical span at residues 534 to 551 (ILPVMIAVILANAVAQSL). At 552 to 898 (QPSLYDSIIR…SPSDSDDKCQ (347 aa)) the chain is on the cytoplasmic side. A CBS 1 domain is found at 587–645 (MVRDVPHVALSCTFRDLRLALHRTKGRTLALVESPESMILLGSIERTQVVALLAAQLSP). Over residues 647-658 (RRRQSKQKRRVA) the composition is skewed to basic residues. Residues 647-675 (RRRQSKQKRRVAHTSPPSCQESPPSPETS) form a disordered region. A Phosphoserine modification is found at S710. The tract at residues 726-766 (FCGSPPPEAASESEKSESSEKRKSKRVRISLASDSDLEGEM) is disordered. Residues 737–746 (ESEKSESSEK) show a composition bias toward basic and acidic residues. Position 758 is a phosphoserine (S758). In terms of domain architecture, CBS 2 spans 790 to 850 (IDPAPFQLVE…GSVTAQGVKV (61 aa)). Positions 812–813 (LL) match the Basolateral membrane sorting motif. The interval 856 to 898 (SFRDSATSSSDTETTEVHALWGPRSRHGLPREGSPSDSDDKCQ) is disordered.

Belongs to the chloride channel (TC 2.A.49) family. ClC-2/CLCN2 subfamily. As to quaternary structure, homodimer. Interacts with auxiliary subunit HEPACAM. Phosphorylated. Activated by dephosphorylation. Ubiquitously expressed.

It localises to the cell membrane. Its subcellular location is the basolateral cell membrane. The protein resides in the cell projection. It is found in the dendritic spine membrane. The protein localises to the axon. It carries out the reaction chloride(in) = chloride(out). The catalysed reaction is thiocyanate(in) = thiocyanate(out). It catalyses the reaction bromide(in) = bromide(out). The enzyme catalyses nitrate(in) = nitrate(out). It carries out the reaction iodide(out) = iodide(in). With respect to regulation, common gate kinetics are down-regulated by intracellular ATP. Inhibited by AK-42, a derivative of meclofenamate. Inhibited by Cd(2+). Inhibited by Zn(2+) and PKC activation. Inhibited at acidic pH. CCLN2:HEPACAM channel conductance is up-regulated upon hypo-osmolarity. Voltage-gated and osmosensitive chloride channel. Forms a homodimeric channel where each subunit has its own ion conduction pathway. Conducts double-barreled currents controlled by two types of gates, two fast glutamate gates that control each subunit independently and a slow common gate that opens and shuts off both subunits simultaneously. Displays inward rectification currents activated upon membrane hyperpolarization and extracellular hypotonicity. Contributes to chloride conductance involved in neuron excitability. In hippocampal neurons, generates a significant part of resting membrane conductance and provides an additional chloride efflux pathway to prevent chloride accumulation in dendrites upon GABA receptor activation. In glia, associates with the auxiliary subunit HEPACAM/GlialCAM at astrocytic processes and myelinated fiber tracts where it may regulate transcellular chloride flux buffering extracellular chloride and potassium concentrations. Regulates aldosterone production in adrenal glands. The opening of CLCN2 channels at hyperpolarized membrane potentials in the glomerulosa causes cell membrane depolarization, activation of voltage-gated calcium channels and increased expression of aldosterone synthase, the rate-limiting enzyme for aldosterone biosynthesis. Contributes to chloride conductance in retinal pigment epithelium involved in phagocytosis of shed photoreceptor outer segments and photoreceptor renewal. Conducts chloride currents at the basolateral membrane of epithelial cells with a role in chloride reabsorption rather than secretion. Permeable to small monovalent anions with chloride &gt; thiocyanate &gt; bromide &gt; nitrate &gt; iodide ion selectivity. The protein is Chloride channel protein 2 (CLCN2) of Oryctolagus cuniculus (Rabbit).